The primary structure comprises 328 residues: dTDP-3,4-didehydro-2,6-dideoxy-alpha-D-glucose 3-reductase (328 aa).

Arg-20 contacts substrate. NADP(+) is bound by residues 38–39 (SR), Leu-75, and His-80. The Proton donor role is filled by Lys-98. Residues Arg-166 and Asp-178 each coordinate NADP(+). Residues Tyr-236 and Thr-256 each coordinate substrate.

It belongs to the Gfo/Idh/MocA family.

The catalysed reaction is dTDP-4-dehydro-2,6-dideoxy-alpha-D-glucose + NADP(+) = dTDP-3,4-didehydro-2,6-dideoxy-alpha-D-glucose + NADPH + H(+). The protein operates within antibiotic biosynthesis. Functionally, involved in the biosynthesis of one of the two 2,6-deoxysugars, dTDP-L-oleandrose, attached to the macrolactone ring oleandolide to produce the aglycone antibiotic oleandomycin. Catalyzes the reduction of the C-3 keto moiety of dTDP-3,4-diketo-2,6-dideoxy-alpha-D-glucose to yield dTDP-4-keto-2,6-dideoxy-alpha-D-glucose. NADPH is the better reductant, however NADH can also be used. The sequence is that of dTDP-3,4-didehydro-2,6-dideoxy-alpha-D-glucose 3-reductase from Streptomyces antibioticus.